Consider the following 469-residue polypeptide: Pancreatic lipase-related protein 2 (469 aa).

A signal peptide spans 1-17 (MLPPWTLGLLLLATVRG). A disulfide bridge links C21 with C27. The segment at 93–105 (IHGFLDKAEDSWP) is required for galactolipase activity. C109 and C120 are oxidised to a cystine. The Nucleophile role is filled by S171. D195 serves as the catalytic Charge relay system. 4 residues coordinate Ca(2+): E206, R209, D211, and D214. A disulfide bridge links C256 with C280. The tract at residues 257–279 (KKNVLSTITDIDGIWEGIGGFVS) is required for galactolipase activity. H282 acts as the Charge relay system in catalysis. 2 disulfides stabilise this stretch: C304/C315 and C318/C323. N353 and N428 each carry an N-linked (GlcNAc...) asparagine glycan. Residues 357–469 (WRYKISVTLS…ENVLQSLYPC (113 aa)) form the PLAT domain. A disulfide bond links C453 and C469.

Belongs to the AB hydrolase superfamily. Lipase family. Pancreas.

It localises to the secreted. The protein localises to the zymogen granule membrane. Its subcellular location is the cell projection. The protein resides in the neuron projection. The catalysed reaction is a triacylglycerol + H2O = a diacylglycerol + a fatty acid + H(+). It catalyses the reaction a 1,2-diacyl-3-O-(beta-D-galactosyl)-sn-glycerol + 2 H2O = 3-beta-D-galactosyl-sn-glycerol + 2 a fatty acid + 2 H(+). The enzyme catalyses 1,2,3-tri-(9Z-octadecenoyl)-glycerol + H2O = di-(9Z)-octadecenoylglycerol + (9Z)-octadecenoate + H(+). It carries out the reaction di-(9Z)-octadecenoylglycerol + H2O = (9Z-octadecenoyl)-glycerol + (9Z)-octadecenoate + H(+). The catalysed reaction is (9Z-octadecenoyl)-glycerol + H2O = glycerol + (9Z)-octadecenoate + H(+). It catalyses the reaction 1-(9Z-octadecenoyl)-glycerol + H2O = glycerol + (9Z)-octadecenoate + H(+). The enzyme catalyses 1,2,3-tripropanoylglycerol + H2O = dipropanoylglycerol + propanoate + H(+). It carries out the reaction 1,2,3-tributanoylglycerol + H2O = dibutanoylglycerol + butanoate + H(+). The catalysed reaction is 1,2,3-trioctanoylglycerol + H2O = dioctanoylglycerol + octanoate + H(+). It catalyses the reaction 1,2-didecanoylglycerol + H2O = decanoylglycerol + decanoate + H(+). The enzyme catalyses long chain 1,2-diacyl-3-O-beta-D-galactosyl-sn-glycerol + H2O = long chain acyl-3-O-beta-D-galactosyl-sn-glycerol + a fatty acid + H(+). It carries out the reaction 1,2-dioctanoyl-3-O-beta-D-galactosyl-sn-glycerol + H2O = octanoyl-3-(beta-D-galactosyl)-sn-glycerol + octanoate + H(+). The catalysed reaction is 1,2-didodecanoyl-3-beta-D-galactosyl-sn-glycerol + H2O = dodecanoyl-3-beta-D-galactosyl-sn-glycerol + dodecanoate + H(+). It catalyses the reaction 1-beta-D-galactosyl-2,3-didodecanoyl-sn-glycerol + H2O = 1-beta-D-galactosyl-dodecanoyl-sn-glycerol + dodecanoate + H(+). The enzyme catalyses a 1,2-diacyl-3-O-[alpha-D-galactosyl-(1-&gt;6)-beta-D-galactosyl]-sn-glycerol + H2O = acyl-3-O-[alpha-D-galactosyl-(1-&gt;6)-beta-D-galactosyl]-sn-glycerol + a fatty acid + H(+). It carries out the reaction long chain 1,2-diacyl-3-O-[alpha-D-galactosyl-(1-&gt;6)-beta-D-galactosyl]-sn-glycerol + H2O = long chain acyl-3-O-[alpha-D-galactosyl-(1-&gt;6)-beta-D-galactosyl]-sn-glycerol + a fatty acid + H(+). The catalysed reaction is 1,2-dioctanoyl-3-O-[alpha-D-galactosyl-(1-&gt;6)-beta-D-galactosyl]-sn-glycerol + H2O = octanoyl-3-O-[alpha-D-galactosyl-(1-&gt;6)-beta-D-galactosyl]-sn-glycerol + octanoate + H(+). It catalyses the reaction 1,2-didodecanoyl-3-O-[alpha-D-galactosyl-(1-&gt;6)-beta-D-galactosyl]-sn-glycerol + H2O = dodecanoyl-3-O-[alpha-D-galactosyl-(1-&gt;6)-beta-D-galactosyl]-sn-glycerol + dodecanoate + H(+). The enzyme catalyses a 1,2-diacyl-sn-glycero-3-phosphocholine + H2O = a monoacyl-sn-glycero-3-phosphocholine + a fatty acid + H(+). Its pathway is glycerolipid metabolism; triacylglycerol degradation. It participates in glycolipid metabolism. Its activity is regulated as follows. Regulated by CLPS and bile salts levels ranging 1-5 mM in neonates and 2-30 mM in healthy adults. CLPS stimulates milk fat digestion in the presence of 4 mM bile salts. Triacylglycerol lipase activity toward short- and medium-chain triglycerides is inhibited by increasing concentrations of bile salts and weakly reactivated by CLPS. Optimal triacylglycerol lipase activity is reached at bile salts concentrations ranging from 0.1 to 0.5 mM and then decreases at concentrations higher than 1 mM. Lipase activity toward long-chain glycerolipids is stimulated by CLPS in the presence of 4 mM bile salts. Galactolipase activity is inhibited at high concentrations of bile salts. Triacylglycerol lipase activity is inhibited by anti-obesity drug tetrahydrolipstatin. In terms of biological role, lipase that primarily hydrolyzes triglycerides and galactosylglycerides. In neonates, may play a major role in pancreatic digestion of dietary fats such as milk fat globules enriched in long-chain triglycerides. Hydrolyzes short-, medium- and long-chain fatty acyls in triglycerides without apparent positional specificity. Can completely deacylate triacylglycerols. When the liver matures and bile salt synthesis increases, likely functions mainly as a galactolipase and monoacylglycerol lipase. Hydrolyzes monogalactosyldiglycerols (MGDG) and digalactosyldiacylglycerols (DGDG) present in a plant-based diet, releasing long-chain polyunsaturated fatty acids. Hydrolyzes medium- and long-chain fatty acyls in galactolipids. May act together with LIPF to hydrolyze partially digested triglycerides. Hydrolyzes long-chain monoglycerides with high efficiency. In cytotoxic T cells, contributes to perforin-dependent cell lysis, but is unlikely to mediate direct cytotoxicity. Also has low phospholipase activity. In neurons, required for the localization of the phospholipid 1-oleoyl-2-palmitoyl-PC (OPPC) to neurite tips through acyl chain remodeling of membrane phospholipids. The resulting OPPC-rich lipid membrane domain recruits the t-SNARE protein STX4 by selectively interacting with the STX4 transmembrane domain and this promotes surface expression of the dopamine transporter SLC6A3/DAT at neurite tips by facilitating fusion of SLC6A3-containing transport vesicles with the plasma membrane. The polypeptide is Pancreatic lipase-related protein 2 (Homo sapiens (Human)).